Here is a 389-residue protein sequence, read N- to C-terminus: ATP phosphoribosyltransferase regulatory subunit (389 aa).

The protein belongs to the class-II aminoacyl-tRNA synthetase family. HisZ subfamily. As to quaternary structure, heteromultimer composed of HisG and HisZ subunits.

The protein resides in the cytoplasm. It participates in amino-acid biosynthesis; L-histidine biosynthesis; L-histidine from 5-phospho-alpha-D-ribose 1-diphosphate: step 1/9. In terms of biological role, required for the first step of histidine biosynthesis. May allow the feedback regulation of ATP phosphoribosyltransferase activity by histidine. The sequence is that of ATP phosphoribosyltransferase regulatory subunit from Moorella thermoacetica (strain ATCC 39073 / JCM 9320).